A 905-amino-acid chain; its full sequence is Tudor domain-containing protein 5 (905 aa).

HTH OST-type domains are found at residues 6–79 (LLAG…KAIG) and 128–204 (AKPA…RSAV). A disordered region spans residues 219–264 (MQSTSPKQRLAGFSPKASSLPERRPEVSLDPSSVSKPEPVKEEQSF). The 77-residue stretch at 288-364 (VSQELKEKLR…ESHWMVVEFK (77 aa)) folds into the HTH OST-type 3 domain. The segment at 368-393 (TQPCEPELSPGDGTTSSPTGELQNPS) is disordered. A compositionally biased stretch (polar residues) spans 379 to 393 (DGTTSSPTGELQNPS). In terms of domain architecture, Tudor spans 523 to 581 (YVRPGQVCCVAPRDMWFYRVVIHEVFSETEVKVYYVDYGDITKVERHSLRFLKACYADL). The disordered stretch occupies residues 694-728 (PDAEIDSQGNDSPSSCRTASNSESGETNLASIDVD). The segment covering 700–723 (SQGNDSPSSCRTASNSESGETNLA) has biased composition (polar residues).

It belongs to the TDRD5 family.

It localises to the cytoplasm. In terms of biological role, required during spermiogenesis to participate in the repression transposable elements and prevent their mobilization, which is essential for the germline integrity. Probably acts via the piRNA metabolic process, which mediates the repression of transposable elements during meiosis by forming complexes composed of piRNAs and Piwi proteins and govern the methylation and subsequent repression of transposons. In Danio rerio (Zebrafish), this protein is Tudor domain-containing protein 5 (tdrd5).